Here is a 283-residue protein sequence, read N- to C-terminus: Putative 4-diphosphocytidyl-2-C-methyl-D-erythritol kinase (283 aa).

Residue Lys-10 is part of the active site. An ATP-binding site is contributed by 94–104 (PVCAGLGGGST). Asp-136 is an active-site residue.

The protein belongs to the GHMP kinase family. IspE subfamily.

The catalysed reaction is 4-CDP-2-C-methyl-D-erythritol + ATP = 4-CDP-2-C-methyl-D-erythritol 2-phosphate + ADP + H(+). Its function is as follows. Catalyzes the phosphorylation of the position 2 hydroxy group of 4-diphosphocytidyl-2C-methyl-D-erythritol. The chain is Putative 4-diphosphocytidyl-2-C-methyl-D-erythritol kinase from Streptococcus agalactiae serotype III (strain NEM316).